Reading from the N-terminus, the 506-residue chain is Cytochrome P450 52B1 (506 aa).

C451 provides a ligand contact to heme.

Belongs to the cytochrome P450 family. Heme serves as cofactor.

In terms of biological role, together with an NADPH cytochrome P450 the enzyme system catalyzes the terminal hydroxylation as the first step in the assimilation of alkanes and fatty acids. The sequence is that of Cytochrome P450 52B1 (CYP52B1) from Candida tropicalis (Yeast).